A 176-amino-acid chain; its full sequence is Disulfide bond formation protein B (176 aa).

Residues 1–14 lie on the Cytoplasmic side of the membrane; the sequence is MMRSLNRCSKHRAA. Residues 15–31 form a helical membrane-spanning segment; the sequence is WLLLALTTFSLELVALY. Residues 32–49 are Periplasmic-facing; the sequence is FQHVMLLKPCVLCVYQRC. Cysteines 41 and 44 form a disulfide. Residues 50–65 form a helical membrane-spanning segment; sequence ALYGVVAAGLVGAIAP. Topologically, residues 66–71 are cytoplasmic; the sequence is ATPLRF. A helical membrane pass occupies residues 72 to 89; that stretch reads SGLAIWLYSAWEGLQLAM. The Periplasmic portion of the chain corresponds to 90–144; it reads KHTDIQLHPSPFVTCDFFVSFPAWLPLDKWLPSVFSASGDCAVRQWHFLSLEMPQ. A disulfide bridge links Cys104 with Cys130. A helical transmembrane segment spans residues 145 to 163; the sequence is WMIVIFGAYLAVAVLILLA. Residues 164 to 176 are Cytoplasmic-facing; that stretch reads QFFPPRKRDLFSR.

It belongs to the DsbB family.

It localises to the cell inner membrane. Its function is as follows. Required for disulfide bond formation in some periplasmic proteins. Acts by oxidizing the DsbA protein. The chain is Disulfide bond formation protein B from Sodalis glossinidius (strain morsitans).